A 309-amino-acid chain; its full sequence is Probable lipid kinase YegS-like (309 aa).

Residues 1 to 134 (MAPSHWRVIL…VDLLRIDADH (134 aa)) form the DAGKc domain. ATP is bound by residues Thr-39, 65–71 (GDGTLSE), and Thr-96. Residues Leu-219, Asp-222, and Leu-224 each contribute to the Mg(2+) site. Glu-280 acts as the Proton acceptor in catalysis.

Belongs to the diacylglycerol/lipid kinase family. YegS lipid kinase subfamily. The cofactor is Mg(2+). Requires Ca(2+) as cofactor.

It localises to the cytoplasm. Probably phosphorylates lipids; the in vivo substrate is unknown. The polypeptide is Probable lipid kinase YegS-like (Xanthomonas euvesicatoria pv. vesicatoria (strain 85-10) (Xanthomonas campestris pv. vesicatoria)).